The sequence spans 598 residues: Serine/threonine-protein kinase cot-1 (598 aa).

Polar residues-rich tracts occupy residues 1 to 16 (MDNT…TNDT), 24 to 33 (TYPTTPSTFP), and 99 to 126 (PRTS…TQTE). 3 disordered regions span residues 1-46 (MDNT…GGSQ), 80-148 (GSAG…NQKK), and 163-190 (RARE…RESI). One can recognise a Protein kinase domain in the interval 214–518 (YQTIKIIGKG…AHEIKSHAFF (305 aa)). ATP is bound by residues 220–228 (IGKGAFGEV) and Lys-243. Asp-337 acts as the Proton acceptor in catalysis. The AGC-kinase C-terminal domain occupies 519-598 (RGVEFDSLRR…TFKRFDNNFR (80 aa)).

This sequence belongs to the protein kinase superfamily. STE Ser/Thr protein kinase family. COT1 subfamily.

The enzyme catalyses L-seryl-[protein] + ATP = O-phospho-L-seryl-[protein] + ADP + H(+). It carries out the reaction L-threonyl-[protein] + ATP = O-phospho-L-threonyl-[protein] + ADP + H(+). Its function is as follows. Protein kinase required for hyphal elongation. In Neurospora crassa (strain ATCC 24698 / 74-OR23-1A / CBS 708.71 / DSM 1257 / FGSC 987), this protein is Serine/threonine-protein kinase cot-1 (cot-1).